The primary structure comprises 239 residues: Exosome complex component Rrp4 (239 aa).

One can recognise an S1 motif domain in the interval 67–139 (GDFVVGIVEE…PVQRVELSLL (73 aa)). In terms of domain architecture, KH spans 151–217 (QGGQVVEIDP…LAVRAIREIE (67 aa)).

The protein belongs to the RRP4 family. As to quaternary structure, component of the archaeal exosome complex. Forms a trimer of Rrp4 and/or Csl4 subunits. The trimer associates with a hexameric ring-like arrangement composed of 3 Rrp41-Rrp42 heterodimers.

The protein localises to the cytoplasm. Its function is as follows. Non-catalytic component of the exosome, which is a complex involved in RNA degradation. Increases the RNA binding and the efficiency of RNA degradation. Confers strong poly(A) specificity to the exosome. The protein is Exosome complex component Rrp4 of Methanopyrus kandleri (strain AV19 / DSM 6324 / JCM 9639 / NBRC 100938).